A 136-amino-acid chain; its full sequence is Large-conductance mechanosensitive channel (136 aa).

2 consecutive transmembrane segments (helical) span residues 10–30 (FAMR…AAFG) and 76–96 (GVFI…FMAI).

The protein belongs to the MscL family. Homopentamer.

The protein localises to the cell inner membrane. Channel that opens in response to stretch forces in the membrane lipid bilayer. May participate in the regulation of osmotic pressure changes within the cell. This Shigella boydii serotype 18 (strain CDC 3083-94 / BS512) protein is Large-conductance mechanosensitive channel.